A 387-amino-acid chain; its full sequence is Sorting nexin-7 (387 aa).

One can recognise a PX domain in the interval 30–151; that stretch reads KDLFITVDEP…IFLTAQAWEL (122 aa). A 1,2-diacyl-sn-glycero-3-phospho-(1D-myo-inositol-3-phosphate) contacts are provided by R73, Q75, K103, and R117. One can recognise a BAR domain in the interval 178-387; sequence GVKNRPEEFM…HLEEASEDKP (210 aa).

It belongs to the sorting nexin family. Heterodimer; heterodimerizes with SNX4.

Its subcellular location is the early endosome membrane. Involved in the regulation of endocytosis and in several stages of intracellular trafficking. Together with SNX4, involved in autophagosome assembly by regulating trafficking and recycling of phospholipid scramblase ATG9A. This is Sorting nexin-7 from Homo sapiens (Human).